Reading from the N-terminus, the 405-residue chain is Nicotinate phosphoribosyltransferase (405 aa).

A Phosphohistidine; by autocatalysis modification is found at His230.

It belongs to the NAPRTase family. Transiently phosphorylated on a His residue during the reaction cycle. Phosphorylation strongly increases the affinity for substrates and increases the rate of nicotinate D-ribonucleotide production. Dephosphorylation regenerates the low-affinity form of the enzyme, leading to product release.

It catalyses the reaction nicotinate + 5-phospho-alpha-D-ribose 1-diphosphate + ATP + H2O = nicotinate beta-D-ribonucleotide + ADP + phosphate + diphosphate. The protein operates within cofactor biosynthesis; NAD(+) biosynthesis; nicotinate D-ribonucleotide from nicotinate: step 1/1. In terms of biological role, catalyzes the synthesis of beta-nicotinate D-ribonucleotide from nicotinate and 5-phospho-D-ribose 1-phosphate at the expense of ATP. This chain is Nicotinate phosphoribosyltransferase, found in Bordetella bronchiseptica (strain ATCC BAA-588 / NCTC 13252 / RB50) (Alcaligenes bronchisepticus).